Reading from the N-terminus, the 146-residue chain is Large ribosomal subunit protein uL11 (146 aa).

The protein belongs to the universal ribosomal protein uL11 family. In terms of assembly, part of the ribosomal stalk of the 50S ribosomal subunit. Interacts with L10 and the large rRNA to form the base of the stalk. L10 forms an elongated spine to which L12 dimers bind in a sequential fashion forming a multimeric L10(L12)X complex. In terms of processing, one or more lysine residues are methylated.

Forms part of the ribosomal stalk which helps the ribosome interact with GTP-bound translation factors. The polypeptide is Large ribosomal subunit protein uL11 (Salinibacter ruber (strain DSM 13855 / M31)).